The primary structure comprises 203 residues: Corrinoid adenosyltransferase (203 aa).

The disordered stretch occupies residues Met-1–Val-21. Gly-41–Ser-47 is a binding site for ATP.

It belongs to the Cob(I)alamin adenosyltransferase family. In terms of assembly, monomer. Mn(2+) serves as cofactor.

The protein localises to the cytoplasm. The catalysed reaction is 2 cob(II)yrinate a,c diamide + reduced [electron-transfer flavoprotein] + 2 ATP = 2 adenosylcob(III)yrinate a,c-diamide + 2 triphosphate + oxidized [electron-transfer flavoprotein] + 3 H(+). The enzyme catalyses 2 cob(II)alamin + reduced [electron-transfer flavoprotein] + 2 ATP = 2 adenosylcob(III)alamin + 2 triphosphate + oxidized [electron-transfer flavoprotein] + 3 H(+). It participates in cofactor biosynthesis; adenosylcobalamin biosynthesis; adenosylcobalamin from cob(II)yrinate a,c-diamide: step 2/7. Functionally, required for both de novo synthesis of the corrin ring for the assimilation of exogenous corrinoids. Participates in the adenosylation of a variety of incomplete and complete corrinoids. This is Corrinoid adenosyltransferase (cobO) from Pseudomonas aeruginosa (strain ATCC 15692 / DSM 22644 / CIP 104116 / JCM 14847 / LMG 12228 / 1C / PRS 101 / PAO1).